The following is a 308-amino-acid chain: Cytochrome b (308 aa).

4 consecutive transmembrane segments (helical) span residues 1-21 (FGSLLGICLLTQIITGLLLAT), 45-66 (WLIRNLHANGASFFFICIYIHI), 81-101 (WNVGVILLLTLMATAFVGYVL), and 146-166 (FFALHFLLPFAITGLTLVHLT). Residues His-51 and His-65 each coordinate heme b. Heme b-binding residues include His-150 and His-164. His-169 is an a ubiquinone binding site. 3 consecutive transmembrane segments (helical) span residues 194–214 (MKDILGFALMIIPLAALALFS), 256–276 (LGGVLALAASILVLFLIPLLH), and 288–308 (LSQILFWTLVANLLILTWVGS).

Belongs to the cytochrome b family. As to quaternary structure, the cytochrome bc1 complex contains 11 subunits: 3 respiratory subunits (MT-CYB, CYC1 and UQCRFS1), 2 core proteins (UQCRC1 and UQCRC2) and 6 low-molecular weight proteins (UQCRH/QCR6, UQCRB/QCR7, UQCRQ/QCR8, UQCR10/QCR9, UQCR11/QCR10 and a cleavage product of UQCRFS1). This cytochrome bc1 complex then forms a dimer. Heme b serves as cofactor.

The protein resides in the mitochondrion inner membrane. Its function is as follows. Component of the ubiquinol-cytochrome c reductase complex (complex III or cytochrome b-c1 complex) that is part of the mitochondrial respiratory chain. The b-c1 complex mediates electron transfer from ubiquinol to cytochrome c. Contributes to the generation of a proton gradient across the mitochondrial membrane that is then used for ATP synthesis. In Ptiloprora plumbea (Leaden honeyeater), this protein is Cytochrome b (MT-CYB).